The following is a 499-amino-acid chain: Glucose-6-phosphate exchanger SLC37A2 (499 aa).

A helical transmembrane segment spans residues 21 to 40; that stretch reads YRGFIIVMTFLFYTCYHMSR. Asn-53, Asn-62, and Asn-66 each carry an N-linked (GlcNAc...) asparagine glycan. The next 11 membrane-spanning stretches (helical) occupy residues 86-106, 116-136, 138-158, 187-207, 208-228, 302-322, 334-354, 362-382, 391-411, 434-454, and 458-478; these read GSLDTAFLVSYAIGMFFSGIF, LSGGMIICGIFTSFMGLGYYW, IHALWYYILFQILNGLAQTTG, AVGNILGSLIAGAFVSTAWGL, SFIVPGIIIAAFGIFCFFFLV, LCLLFAKLVSYTFLYWLPLYI, GDLSTLFDVGGIIGGILAGGI, AITCTIMLILTAPMLFIYNYL, VAMLIVCGILVNGPYSLITTA, AIIDGSGSIGAALGPSLAGVL, and GWNYVFYMLIAADICACLLLV.

It belongs to the major facilitator superfamily. Organophosphate:Pi antiporter (OPA) (TC 2.A.1.4) family.

The protein localises to the endoplasmic reticulum membrane. The catalysed reaction is D-glucose 6-phosphate(in) + phosphate(out) = D-glucose 6-phosphate(out) + phosphate(in). Inorganic phosphate and glucose-6-phosphate antiporter. May transport cytoplasmic glucose-6-phosphate into the lumen of the endoplasmic reticulum and translocate inorganic phosphate into the opposite direction. The polypeptide is Glucose-6-phosphate exchanger SLC37A2 (Xenopus tropicalis (Western clawed frog)).